The primary structure comprises 447 residues: Glutamyl-tRNA reductase (447 aa).

Residues 56 to 59, Ser119, 124 to 126, and Gln130 contribute to the substrate site; these read TCNR and ETQ. The Nucleophile role is filled by Cys57. 201 to 206 serves as a coordination point for NADP(+); sequence GLGEMS.

Belongs to the glutamyl-tRNA reductase family. In terms of assembly, homodimer.

The enzyme catalyses (S)-4-amino-5-oxopentanoate + tRNA(Glu) + NADP(+) = L-glutamyl-tRNA(Glu) + NADPH + H(+). The protein operates within porphyrin-containing compound metabolism; protoporphyrin-IX biosynthesis; 5-aminolevulinate from L-glutamyl-tRNA(Glu): step 1/2. Functionally, catalyzes the NADPH-dependent reduction of glutamyl-tRNA(Glu) to glutamate 1-semialdehyde (GSA). This Helicobacter acinonychis (strain Sheeba) protein is Glutamyl-tRNA reductase.